A 30-amino-acid chain; its full sequence is Elongation factor 1-delta (30 aa).

This sequence belongs to the EF-1-beta/EF-1-delta family. As to quaternary structure, EF-1 is composed of 4 subunits: alpha, beta (1B-alpha=beta'), delta (1B-beta), and gamma (1B-gamma).

EF-1-beta and EF-1-delta stimulate the exchange of GDP bound to EF-1-alpha to GTP. The sequence is that of Elongation factor 1-delta from Populus euphratica (Euphrates poplar).